A 199-amino-acid polypeptide reads, in one-letter code: Ribonuclease HII (199 aa).

The RNase H type-2 domain occupies 10–199 (HLVAGVDEVG…VKRALGLASN (190 aa)). Residues aspartate 16, glutamate 17, and aspartate 108 each coordinate a divalent metal cation.

Belongs to the RNase HII family. The cofactor is Mn(2+). Mg(2+) is required as a cofactor.

It localises to the cytoplasm. The catalysed reaction is Endonucleolytic cleavage to 5'-phosphomonoester.. Its function is as follows. Endonuclease that specifically degrades the RNA of RNA-DNA hybrids. The sequence is that of Ribonuclease HII from Klebsiella pneumoniae (strain 342).